Consider the following 202-residue polypeptide: Large ribosomal subunit protein bL25 (202 aa).

This sequence belongs to the bacterial ribosomal protein bL25 family. CTC subfamily. In terms of assembly, part of the 50S ribosomal subunit; part of the 5S rRNA/L5/L18/L25 subcomplex. Contacts the 5S rRNA. Binds to the 5S rRNA independently of L5 and L18.

This is one of the proteins that binds to the 5S RNA in the ribosome where it forms part of the central protuberance. The sequence is that of Large ribosomal subunit protein bL25 from Rickettsia bellii (strain OSU 85-389).